A 197-amino-acid chain; its full sequence is Outer membrane protein 26 (197 aa).

An N-terminal signal peptide occupies residues 1-23 (MKNIAKVTALALGIALASGYASA).

The protein belongs to the Skp family.

It is found in the cell outer membrane. The sequence is that of Outer membrane protein 26 (omp26) from Haemophilus influenzae (strain ATCC 51907 / DSM 11121 / KW20 / Rd).